Consider the following 1002-residue polypeptide: Isoleucine--tRNA ligase (1002 aa).

Positions 70 to 80 match the 'HIGH' region motif; sequence PYANGNIHIGH. Glu630 is a binding site for L-isoleucyl-5'-AMP. The short motif at 671-675 is the 'KMSKS' region element; that stretch reads KMSKS. Lys674 contributes to the ATP binding site.

It belongs to the class-I aminoacyl-tRNA synthetase family. IleS type 1 subfamily. In terms of assembly, monomer.

It is found in the cytoplasm. It catalyses the reaction tRNA(Ile) + L-isoleucine + ATP = L-isoleucyl-tRNA(Ile) + AMP + diphosphate. Its function is as follows. Catalyzes the attachment of isoleucine to tRNA(Ile). As IleRS can inadvertently accommodate and process structurally similar amino acids such as valine, to avoid such errors it has two additional distinct tRNA(Ile)-dependent editing activities. One activity is designated as 'pretransfer' editing and involves the hydrolysis of activated Val-AMP. The other activity is designated 'posttransfer' editing and involves deacylation of mischarged Val-tRNA(Ile). The sequence is that of Isoleucine--tRNA ligase from Bradyrhizobium diazoefficiens (strain JCM 10833 / BCRC 13528 / IAM 13628 / NBRC 14792 / USDA 110).